The sequence spans 177 residues: Alkyl hydroperoxide reductase AhpD (177 aa).

Cysteine 130 serves as the catalytic Proton donor. Cysteines 130 and 133 form a disulfide. Cysteine 133 serves as the catalytic Cysteine sulfenic acid (-SOH) intermediate.

The protein belongs to the AhpD family. In terms of assembly, homotrimer.

The enzyme catalyses N(6)-[(R)-dihydrolipoyl]-L-lysyl-[lipoyl-carrier protein] + a hydroperoxide = N(6)-[(R)-lipoyl]-L-lysyl-[lipoyl-carrier protein] + an alcohol + H2O. Antioxidant protein with alkyl hydroperoxidase activity. Required for the reduction of the AhpC active site cysteine residues and for the regeneration of the AhpC enzyme activity. The sequence is that of Alkyl hydroperoxide reductase AhpD from Mycobacterium bovis (strain ATCC BAA-935 / AF2122/97).